We begin with the raw amino-acid sequence, 601 residues long: UvrABC system protein C (601 aa).

A GIY-YIG domain is found at 15 to 94 (LQPGVYLFKN…IKSYKPRYNI (80 aa)). The UVR domain maps to 202-237 (QEIVREKEKEMAMAARSLEFEKAARLRDQIQSLRQL).

It belongs to the UvrC family. In terms of assembly, interacts with UvrB in an incision complex.

It localises to the cytoplasm. The UvrABC repair system catalyzes the recognition and processing of DNA lesions. UvrC both incises the 5' and 3' sides of the lesion. The N-terminal half is responsible for the 3' incision and the C-terminal half is responsible for the 5' incision. In Syntrophomonas wolfei subsp. wolfei (strain DSM 2245B / Goettingen), this protein is UvrABC system protein C.